The chain runs to 349 residues: Small ribosomal subunit biogenesis GTPase RsgA (349 aa).

The disordered stretch occupies residues 1 to 38; it reads MSKNKLSKGQERRVQANHQRRLKRTDNKPELDDSQLGE. One can recognise a CP-type G domain in the interval 102–272; sequence TSVLNRPDIY…VIDSPGVREF (171 aa). GTP contacts are provided by residues 158-161 and 212-220; these read NKID and GQSGVGKSS. Zn(2+) contacts are provided by C296, C301, H303, and C309.

The protein belongs to the TRAFAC class YlqF/YawG GTPase family. RsgA subfamily. In terms of assembly, monomer. Associates with 30S ribosomal subunit, binds 16S rRNA. The cofactor is Zn(2+).

It is found in the cytoplasm. In terms of biological role, one of several proteins that assist in the late maturation steps of the functional core of the 30S ribosomal subunit. Helps release RbfA from mature subunits. May play a role in the assembly of ribosomal proteins into the subunit. Circularly permuted GTPase that catalyzes slow GTP hydrolysis, GTPase activity is stimulated by the 30S ribosomal subunit. The chain is Small ribosomal subunit biogenesis GTPase RsgA from Serratia proteamaculans (strain 568).